Reading from the N-terminus, the 438-residue chain is Vasoactive intestinal polypeptide receptor 2 (438 aa).

A signal peptide spans 1-23 (MRTLLPPALLTCWLLAPVNSIHP). Topologically, residues 24–124 (ECRFHLEIQE…EDESKITFYI (101 aa)) are extracellular. Cystine bridges form between C38/C61, C52/C93, and C75/C109. Residues N58, N88, and N92 are each glycosylated (N-linked (GlcNAc...) asparagine). A helical transmembrane segment spans residues 125 to 150 (LVKAIYTLGYSVSLMSLATGSIILCL). Over 151–158 (FRKLHCTR) the chain is Cytoplasmic. Residues 159–180 (NYIHLNLFLSFILRAISVLVKD) traverse the membrane as a helical segment. The Extracellular portion of the chain corresponds to 181-203 (DVLYSSSGTLHCPDQPSSWVGCK). Cysteines 202 and 271 form a disulfide. A helical membrane pass occupies residues 204 to 228 (LSLVFLQYCIMANFFWLLVEGLYLH). Over 229–239 (TLLVAMLPPRR) the chain is Cytoplasmic. The chain crosses the membrane as a helical span at residues 240-261 (CFLAYLLIGWGLPTVCIGAWTA). The Extracellular portion of the chain corresponds to 262 to 280 (ARLYLEDTGCWDTNDHSVP). Residues 281–304 (WWVIRIPILISIIVNFVLFISIIR) form a helical membrane-spanning segment. At 305 to 325 (ILLQKLTSPDVGGNDQSQYKR) the chain is on the cytoplasmic side. The chain crosses the membrane as a helical span at residues 326–346 (LAKSTLLLIPLFGVHYMVFAV). The Extracellular portion of the chain corresponds to 347–354 (FPISISSK). Residues 355–378 (YQILFELCLGSFQGLVVAVLYCFL) traverse the membrane as a helical segment. Topologically, residues 379 to 438 (NSEVQCELKRKWRSRCPTPSASRDYRVCGSSFSRNGSEGALQFHRGSRAQSFLQTETSVI) are cytoplasmic.

This sequence belongs to the G-protein coupled receptor 2 family. Interacts with ADCYAP1/PACAP (via N-terminal extracellular domain); activated by PACAP27 and CAPAC38 neuropeptides. Interacts with VIP; the interaction results in VIPR1 activation. In terms of tissue distribution, expressed in CD4+ T-cells, but not in CD8+ T-cells. Expressed in the T-cell lines Jurkat, Peer, MOLT-4, HSB, YT and SUP-T1, but not in the T-cell lines HARRIS and HuT 78.

Its subcellular location is the cell membrane. Functionally, g protein-coupled receptor activated by the neuropeptides vasoactive intestinal peptide (VIP) and pituitary adenylate cyclase-activating polypeptide (ADCYAP1/PACAP). Binds VIP and both PACAP27 and PACAP38 bioactive peptides with the following order of potency PACAP38 = VIP &gt; PACAP27. Ligand binding causes a conformation change that triggers signaling via guanine nucleotide-binding proteins (G proteins) and modulates the activity of downstream effectors. Activates cAMP-dependent pathway. May be coupled to phospholipase C. This is Vasoactive intestinal polypeptide receptor 2 from Homo sapiens (Human).